Reading from the N-terminus, the 765-residue chain is Zinc finger and BTB domain-containing protein 49 (765 aa).

One can recognise a BTB domain in the interval 25 to 91; the sequence is CDCMLVVKGV…MYTSHLDLNQ (67 aa). Disordered regions lie at residues 165-203 and 275-294; these read QQNK…GSCT and NFLA…DATC. 7 consecutive C2H2-type zinc fingers follow at residues 395–417, 423–445, 451–473, 479–501, 507–529, 535–557, and 563–585; these read YACE…KRSH, FECN…LRRH, YICE…IIIH, HLCD…KKTH, FTCD…RIRH, YSCS…VRTH, and YTCE…KKMH.

It belongs to the krueppel C2H2-type zinc-finger protein family. In terms of assembly, isoform 1 interacts with EP300 and KAT5/Tip60. The interaction with EP300 is direct and leads to synergistic induction of CDKN1A. On the CDKN1A promoter, forms a complex with ZBTB17/Miz-1; this interaction leads to additive CDKN1A transactivation. Isoform 3 also interacts with ZBTB17; this interaction may block ZBTB17 repressor activity. In terms of tissue distribution, highly expressed in normal epidermis and in other epithelial tissues, including in colon and lung. Tends to be down-regulated in colon, lung and skin cancer tissues.

Its subcellular location is the cytoplasm. The protein localises to the nucleus. Its function is as follows. Transcription factor. Inhibits cell proliferation by activating either CDKN1A/p21 transcription or RB1 transcription. Functionally, binds CDKN1A promoter and activates its transcription; this activity is further potentiated in the presence of EP300 (synergistic) and ZBTB17/Miz-1 (additive). In terms of biological role, activates RB1 transcription most probably by antagonizing ZBTB17 repression of RB1. Does not bind directly RB1 promoter. This is Zinc finger and BTB domain-containing protein 49 (ZBTB49) from Homo sapiens (Human).